The following is a 111-amino-acid chain: Nucleoid-associated protein CYA_1369 (111 aa).

Belongs to the YbaB/EbfC family. As to quaternary structure, homodimer.

The protein localises to the cytoplasm. It localises to the nucleoid. Binds to DNA and alters its conformation. May be involved in regulation of gene expression, nucleoid organization and DNA protection. In Synechococcus sp. (strain JA-3-3Ab) (Cyanobacteria bacterium Yellowstone A-Prime), this protein is Nucleoid-associated protein CYA_1369.